We begin with the raw amino-acid sequence, 407 residues long: Lysosome-associated membrane glycoprotein 1 (407 aa).

An N-terminal signal peptide occupies residues 1-21; the sequence is MAAPGARRPLLLLLLAGLAHS. A first lumenal domain region spans residues 22–189; it reads APALFEVKDN…SKEETRCPQD (168 aa). Residues 22-371 are Lumenal-facing; that stretch reads APALFEVKDN…VEECVQDGNN (350 aa). 10 N-linked (GlcNAc...) asparagine glycosylation sites follow: Asn32, Asn59, Asn71, Asn79, Asn102, Asn116, Asn125, Asn145, Asn160, and Asn178. A disulfide bridge links Cys36 with Cys75. Residues Cys150 and Cys186 are joined by a disulfide bond. The interval 180–211 is disordered; that stretch reads SKEETRCPQDQPSPTTGPPSPSPPLVPTNPSV. The segment at 190–219 is hinge; the sequence is QPSPTTGPPSPSPPLVPTNPSVSKYNVTGD. Positions 194 to 206 are enriched in pro residues; it reads TTGPPSPSPPLVP. Residues Asn215, Asn220, Asn233, Asn241, Asn271, Asn283, Asn297, and Asn312 are each glycosylated (N-linked (GlcNAc...) asparagine). Residues 220 to 371 are second lumenal domain; it reads NGTCLLASMA…VEECVQDGNN (152 aa). The cysteines at positions 223 and 260 are disulfide-linked. Cys328 and Cys365 are disulfide-bonded. Residues 372 to 395 traverse the membrane as a helical segment; it reads MLIPIAVGGALAGLVLIVLIAYLI. At 396 to 407 the chain is on the cytoplasmic side; it reads GRKRSHAGYQTI.

Belongs to the LAMP family. Interacts with ABCB9; this interaction strongly stabilizes ABCB9 and protects ABCB9 against lysosomal degradation. Interacts with FURIN. Interacts with TMEM175; inhibiting the proton channel activity of TMEM175. In terms of processing, O- and N-glycosylated; some of the N-glycans attached to LAMP-1 are polylactosaminoglycans.

The protein resides in the lysosome membrane. Its subcellular location is the endosome membrane. The protein localises to the late endosome membrane. It localises to the cell membrane. It is found in the cytolytic granule membrane. Its function is as follows. Lysosomal membrane glycoprotein which plays an important role in lysosome biogenesis, lysosomal pH regulation, autophagy and cholesterol homeostasis. Acts as an important regulator of lysosomal lumen pH regulation by acting as a direct inhibitor of the proton channel TMEM175, facilitating lysosomal acidification for optimal hydrolase activity. Also plays an important role in NK-cells cytotoxicity. Mechanistically, participates in cytotoxic granule movement to the cell surface and perforin trafficking to the lytic granule. In addition, protects NK-cells from degranulation-associated damage induced by their own cytotoxic granule content. Presents carbohydrate ligands to selectins. The sequence is that of Lysosome-associated membrane glycoprotein 1 (Lamp1) from Rattus norvegicus (Rat).